We begin with the raw amino-acid sequence, 152 residues long: 6,7-dimethyl-8-ribityllumazine synthase (152 aa).

Residues Phe21, 55-57, and 79-81 contribute to the 5-amino-6-(D-ribitylamino)uracil site; these read AFE and CVI. Residue 84 to 85 participates in (2S)-2-hydroxy-3-oxobutyl phosphate binding; the sequence is AT. The active-site Proton donor is the His87. Residue Phe112 coordinates 5-amino-6-(D-ribitylamino)uracil. Arg126 contributes to the (2S)-2-hydroxy-3-oxobutyl phosphate binding site.

It belongs to the DMRL synthase family. Forms an icosahedral capsid composed of 60 subunits, arranged as a dodecamer of pentamers.

It carries out the reaction (2S)-2-hydroxy-3-oxobutyl phosphate + 5-amino-6-(D-ribitylamino)uracil = 6,7-dimethyl-8-(1-D-ribityl)lumazine + phosphate + 2 H2O + H(+). The protein operates within cofactor biosynthesis; riboflavin biosynthesis; riboflavin from 2-hydroxy-3-oxobutyl phosphate and 5-amino-6-(D-ribitylamino)uracil: step 1/2. Functionally, catalyzes the formation of 6,7-dimethyl-8-ribityllumazine by condensation of 5-amino-6-(D-ribitylamino)uracil with 3,4-dihydroxy-2-butanone 4-phosphate. This is the penultimate step in the biosynthesis of riboflavin. This Staphylococcus carnosus (strain TM300) protein is 6,7-dimethyl-8-ribityllumazine synthase.